We begin with the raw amino-acid sequence, 510 residues long: Protein PLASTID TRANSCRIPTIONALLY ACTIVE 16, chloroplastic (510 aa).

Polar residues predominate over residues 1–14 (MASSSTSFPLTTAP). A chloroplast-targeting transit peptide spans 1 to 19 (MASSSTSFPLTTAPPQGVR). Disordered regions lie at residues 1-24 (MASS…NRRK) and 38-58 (LGKT…NPFQ). A compositionally biased stretch (basic and acidic residues) spans 41-51 (TKGDDDSEGKQ). NADP(+) is bound at residue 94 to 123 (IFVAGATGQAGIRIAQTLLQRGFSVRAGVP). Residues 354–403 (ARERAEEEAKVAADKAREAAEAAKEFEKQMQKLSEKEAEAASLAEDAQQK) are a coiled coil. Serine 395 is modified (phosphoserine). Threonine 451 bears the Phosphothreonine; by STN7 mark. Positions 453-493 (RGQAKARNLPPKKAVVKQRPSSPFASKPKEERPKKPEKEVR) are disordered. The segment covering 479 to 493 (KPKEERPKKPEKEVR) has biased composition (basic and acidic residues).

It belongs to the NAD(P)-dependent epimerase/dehydratase family. Component of the plastid transcriptionally active chromosome required for plastid gene expression. Interacts with DEGP1 under high light conditions and maybe its degradation target. Post-translationally, excluded from chloroplast nucleoid when phosphorylated on Thr-451 by STN7 that may regulate membrane-anchoring functions of the nucleoid.

The protein resides in the plastid. Its subcellular location is the chloroplast stroma. The protein localises to the chloroplast nucleoid. It is found in the chloroplast thylakoid membrane. In terms of biological role, probably involved in the regulation of plastid gene expression. The sequence is that of Protein PLASTID TRANSCRIPTIONALLY ACTIVE 16, chloroplastic from Arabidopsis thaliana (Mouse-ear cress).